The sequence spans 98 residues: NADH-ubiquinone oxidoreductase chain 4L (98 aa).

Transmembrane regions (helical) follow at residues 1 to 21, 29 to 49, and 61 to 81; these read MSITTLNIMVAFMMALLGMFV, SLLCLEGMMLSLFMLATIVSL, and VILLVFAACEAAVGLALLIMV.

Belongs to the complex I subunit 4L family. In terms of assembly, core subunit of respiratory chain NADH dehydrogenase (Complex I) which is composed of 45 different subunits.

It is found in the mitochondrion inner membrane. It catalyses the reaction a ubiquinone + NADH + 5 H(+)(in) = a ubiquinol + NAD(+) + 4 H(+)(out). In terms of biological role, core subunit of the mitochondrial membrane respiratory chain NADH dehydrogenase (Complex I) which catalyzes electron transfer from NADH through the respiratory chain, using ubiquinone as an electron acceptor. Part of the enzyme membrane arm which is embedded in the lipid bilayer and involved in proton translocation. This is NADH-ubiquinone oxidoreductase chain 4L (MT-ND4L) from Ochotona princeps (Southern American pika).